A 60-amino-acid chain; its full sequence is Large ribosomal subunit protein uL30 (60 aa).

This sequence belongs to the universal ribosomal protein uL30 family. As to quaternary structure, part of the 50S ribosomal subunit.

This chain is Large ribosomal subunit protein uL30, found in Finegoldia magna (strain ATCC 29328 / DSM 20472 / WAL 2508) (Peptostreptococcus magnus).